We begin with the raw amino-acid sequence, 126 residues long: Protein ApaG (126 aa).

The region spanning 2 to 126 (TELETSIKID…FRLSIPGLLH (125 aa)) is the ApaG domain.

The chain is Protein ApaG from Shewanella woodyi (strain ATCC 51908 / MS32).